Reading from the N-terminus, the 115-residue chain is Large ribosomal subunit protein bL19 (115 aa).

It belongs to the bacterial ribosomal protein bL19 family.

This protein is located at the 30S-50S ribosomal subunit interface and may play a role in the structure and function of the aminoacyl-tRNA binding site. This Streptococcus pneumoniae (strain JJA) protein is Large ribosomal subunit protein bL19.